The following is a 295-amino-acid chain: Ribosomal RNA small subunit methyltransferase A (295 aa).

Positions 28, 30, 55, 76, 101, and 131 each coordinate S-adenosyl-L-methionine.

It belongs to the class I-like SAM-binding methyltransferase superfamily. rRNA adenine N(6)-methyltransferase family. RsmA subfamily.

It localises to the cytoplasm. The enzyme catalyses adenosine(1518)/adenosine(1519) in 16S rRNA + 4 S-adenosyl-L-methionine = N(6)-dimethyladenosine(1518)/N(6)-dimethyladenosine(1519) in 16S rRNA + 4 S-adenosyl-L-homocysteine + 4 H(+). Specifically dimethylates two adjacent adenosines (A1518 and A1519) in the loop of a conserved hairpin near the 3'-end of 16S rRNA in the 30S particle. May play a critical role in biogenesis of 30S subunits. The chain is Ribosomal RNA small subunit methyltransferase A from Pelotomaculum thermopropionicum (strain DSM 13744 / JCM 10971 / SI).